The primary structure comprises 89 residues: DNA/RNA-binding protein Alba (89 aa).

This sequence belongs to the histone-like Alba family.

The protein resides in the cytoplasm. It is found in the chromosome. In terms of biological role, binds double-stranded DNA tightly but without sequence specificity. Involved in DNA compaction. In Methanothrix thermoacetophila (strain DSM 6194 / JCM 14653 / NBRC 101360 / PT) (Methanosaeta thermophila), this protein is DNA/RNA-binding protein Alba.